Consider the following 91-residue polypeptide: Elongation factor 1-beta (91 aa).

It belongs to the EF-1-beta/EF-1-delta family.

Functionally, promotes the exchange of GDP for GTP in EF-1-alpha/GDP, thus allowing the regeneration of EF-1-alpha/GTP that could then be used to form the ternary complex EF-1-alpha/GTP/AAtRNA. The sequence is that of Elongation factor 1-beta from Thermofilum pendens (strain DSM 2475 / Hrk 5).